A 660-amino-acid polypeptide reads, in one-letter code: Bifunctional polymyxin resistance protein ArnA (660 aa).

A formyltransferase ArnAFT region spans residues 1–304; it reads MKTVVFAYHD…TLGLVQGSRL (304 aa). Residue 86-88 participates in (6R)-10-formyltetrahydrofolate binding; the sequence is HLI. H104 functions as the Proton donor; for formyltransferase activity in the catalytic mechanism. Residues R114 and 136–140 each bind (6R)-10-formyltetrahydrofolate; that span reads VKRAD. A dehydrogenase ArnADH region spans residues 314 to 660; sequence RRTRVLILGV…RTVDLTDKPS (347 aa). NAD(+) is bound by residues D347 and 368-369; that span reads DI. UDP-alpha-D-glucuronate is bound by residues A393, Y398, and 432 to 433; that span reads TS. E434 (proton acceptor; for decarboxylase activity) is an active-site residue. UDP-alpha-D-glucuronate is bound by residues R460, N492, 526–535, and Y613; that span reads KLIDGGKQKR. Catalysis depends on R619, which acts as the Proton donor; for decarboxylase activity.

The protein in the N-terminal section; belongs to the Fmt family. UDP-L-Ara4N formyltransferase subfamily. This sequence in the C-terminal section; belongs to the NAD(P)-dependent epimerase/dehydratase family. UDP-glucuronic acid decarboxylase subfamily. Homohexamer, formed by a dimer of trimers.

It carries out the reaction UDP-alpha-D-glucuronate + NAD(+) = UDP-beta-L-threo-pentopyranos-4-ulose + CO2 + NADH. The catalysed reaction is UDP-4-amino-4-deoxy-beta-L-arabinose + (6R)-10-formyltetrahydrofolate = UDP-4-deoxy-4-formamido-beta-L-arabinose + (6S)-5,6,7,8-tetrahydrofolate + H(+). It functions in the pathway nucleotide-sugar biosynthesis; UDP-4-deoxy-4-formamido-beta-L-arabinose biosynthesis; UDP-4-deoxy-4-formamido-beta-L-arabinose from UDP-alpha-D-glucuronate: step 1/3. Its pathway is nucleotide-sugar biosynthesis; UDP-4-deoxy-4-formamido-beta-L-arabinose biosynthesis; UDP-4-deoxy-4-formamido-beta-L-arabinose from UDP-alpha-D-glucuronate: step 3/3. It participates in bacterial outer membrane biogenesis; lipopolysaccharide biosynthesis. In terms of biological role, bifunctional enzyme that catalyzes the oxidative decarboxylation of UDP-glucuronic acid (UDP-GlcUA) to UDP-4-keto-arabinose (UDP-Ara4O) and the addition of a formyl group to UDP-4-amino-4-deoxy-L-arabinose (UDP-L-Ara4N) to form UDP-L-4-formamido-arabinose (UDP-L-Ara4FN). The modified arabinose is attached to lipid A and is required for resistance to polymyxin and cationic antimicrobial peptides. The polypeptide is Bifunctional polymyxin resistance protein ArnA (Escherichia coli (strain SE11)).